A 1463-amino-acid chain; its full sequence is Nucleoporin NUP152 (1463 aa).

Disordered regions lie at residues 1 to 199 (MDPP…GRPG), 339 to 568 (GIPD…ELPA), and 609 to 1064 (TTKK…FGNT). 6 stretches are compositionally biased toward polar residues: residues 32 to 42 (STNSNSVTANA), 81 to 92 (GPSSKLSQSVSA), 144 to 155 (TSSKATSFSGAP), 175 to 191 (TTYTQRVSSHPLTQSFP), 367 to 378 (PSSSTFTHTASP), and 416 to 472 (PAKT…SSNI). Acidic residues predominate over residues 481–498 (KDEDNESDTGSEAEAEDE). 2 stretches are compositionally biased toward low complexity: residues 511–523 (GASSSAPSEGGES) and 616–630 (AAAPAEAPKEATPTT). Composition is skewed to polar residues over residues 651-664 (IFGSTTNPTETSIP), 673-689 (PATSTTNSLFGATTSAA), and 720-746 (TTESPKTNLFQFGTPNKTETAPATQPQ). The FXFG 1 repeat unit spans residues 729-732 (FQFG). The span at 753–768 (KPPSTETPTEKPATTS) shows a compositional bias: low complexity. Polar residues predominate over residues 777–789 (PATTSSLFGSATT). The segment covering 803 to 813 (TTTPADKPTTT) has biased composition (low complexity). Over residues 814-828 (NLFGSTSTQATSGSD) the composition is skewed to polar residues. One copy of the FXFG 2 repeat lies at 835–838 (FAFG). The segment covering 840 to 863 (TTESKPTTSLFGSTTPAPATSTEN) has biased composition (polar residues). Over residues 870 to 881 (ATTTSATPATNT) the composition is skewed to low complexity. 5 stretches are compositionally biased toward polar residues: residues 900-923 (GSSTTTAAPVFQFGSTPASTSTEQ), 940-961 (GSTSATSTEQKPLFGSSTTMTE), 968-987 (SISTTATEQKPLFGSTSTTE), 998-1029 (STEQKSLFGITPSTTENNPASIFGNSSTSTEQ), and 1037-1055 (PASTEQKPLFGSTPSTTEN). Residues 910–913 (FQFG) form an FXFG 3 repeat. FXFG repeat units lie at residues 1074–1077 (FNFG), 1127–1130 (FNFG), 1141–1144 (FTFG), and 1152–1155 (FTFG). Disordered regions lie at residues 1155-1174 (GASSDSSNASNNASSAPIFS) and 1179-1217 (QPSSTPLFGQNNPPAASNIFASSLAPVGGTSTGTSKHVP). A compositionally biased stretch (low complexity) spans 1156-1170 (ASSDSSNASNNASSA). An FXFG 8 repeat occupies 1173 to 1176 (FSFG). Over residues 1179–1199 (QPSSTPLFGQNNPPAASNIFA) the composition is skewed to polar residues. One copy of the FXFG 9 repeat lies at 1236 to 1239 (FTFG). A compositionally biased stretch (low complexity) spans 1240 to 1271 (GASSLATTPAASTPEPSAANAAAAGEDQGASA). Disordered stretches follow at residues 1240–1335 (GASS…PWKV) and 1416–1463 (AALE…DEKK). Residues 1289 to 1427 (GEEDESVVHE…LEEHKKANEK (139 aa)) enclose the RanBD1 domain. Over residues 1418-1463 (LEEHKKANEKKDGEKNEESEKKDEKQEEKKNEEKKDEKEEKKDEKK) the composition is skewed to basic and acidic residues.

The nuclear pore complex (NPC) constitutes the exclusive means of nucleocytoplasmic transport. NPCs allow the passive diffusion of ions and small molecules and the active, nuclear transport receptor-mediated bidirectional transport of macromolecules such as proteins, RNAs, ribonucleoparticles (RNPs), and ribosomal subunits across the nuclear envelope. The 55-60 MDa NPC is composed of at least 28 different subunits: AMO1, ELYS, GLE1, GLE2, MLP1, NDC1, NIC96, NSP1, NUP133, NUP145, NUP152, NUP159, NUP170, NUP188, NUP192, NUP37, NUP49, NUP53, NUP56, NUP57, NUP82, NUP84, NUP85, POM152, POM33, POM34, SEC13 and SEH1. Due to its 8-fold rotational symmetry, all subunits are present with 8 copies or multiples thereof.

The protein localises to the nucleus. It is found in the nuclear pore complex. The protein resides in the nucleus membrane. In terms of biological role, functions as a component of the nuclear pore complex (NPC). NPC components, collectively referred to as nucleoporins (NUPs), can play the role of both NPC structural components and of docking or interaction partners for transiently associated nuclear transport factors. Active directional transport is assured by both, a Phe-Gly (FG) repeat affinity gradient for these transport factors across the NPC and a transport cofactor concentration gradient across the nuclear envelope (GSP1 and GSP2 GTPases associated predominantly with GTP in the nucleus, with GDP in the cytoplasm). In Chaetomium thermophilum (strain DSM 1495 / CBS 144.50 / IMI 039719) (Thermochaetoides thermophila), this protein is Nucleoporin NUP152 (NUP152).